Reading from the N-terminus, the 349-residue chain is Protein O-mannose kinase (349 aa).

Topologically, residues 1 to 19 (MGQQHGARNGLTHRELPRG) are cytoplasmic. The chain crosses the membrane as a helical; Signal-anchor for type II membrane protein span at residues 20–42 (MGLLLAMALMNVVLYVCLDHLFI). Residues 43–349 (SPGRATEDPR…TVMSQTKEML (307 aa)) are Lumenal-facing. N-linked (GlcNAc...) asparagine glycans are attached at residues Asn66, Asn164, and Asn219. The Protein kinase domain occupies 80-349 (VRQLKLVGEG…TVMSQTKEML (270 aa)).

It belongs to the protein kinase superfamily. Ser/Thr protein kinase family. STKL subfamily.

Its subcellular location is the endoplasmic reticulum membrane. The catalysed reaction is 3-O-[beta-D-GalNAc-(1-&gt;3)-beta-D-GlcNAc-(1-&gt;4)-alpha-D-Man]-L-Thr-[protein] + ATP = 3-O-[beta-D-GalNAc-(1-&gt;3)-beta-D-GlcNAc-(1-&gt;4)-(O-6-P-alpha-D-Man)]-Thr-[protein] + ADP + H(+). Protein O-mannose kinase that specifically mediates phosphorylation at the 6-position of an O-mannose of the trisaccharide (N-acetylgalactosamine (GalNAc)-beta-1,3-N-acetylglucosamine (GlcNAc)-beta-1,4-mannose) to generate phosphorylated O-mannosyl trisaccharide (N-acetylgalactosamine-beta-1,3-N-acetylglucosamine-beta-1,4-(phosphate-6-)mannose). Phosphorylated O-mannosyl trisaccharide is a carbohydrate structure present in alpha-dystroglycan (DAG1), which is required for binding laminin G-like domain-containing extracellular proteins with high affinity. Only shows kinase activity when the GalNAc-beta-3-GlcNAc-beta-terminus is linked to the 4-position of O-mannose, suggesting that this disaccharide serves as the substrate recognition motif. The protein is Protein O-mannose kinase (Pomk) of Rattus norvegicus (Rat).